Here is a 630-residue protein sequence, read N- to C-terminus: Chaperone protein HtpG (630 aa).

Residues 1–336 (MTTTVEQTAE…TADLPLNVSR (336 aa)) are a; substrate-binding. The interval 337–551 (EMIQESPILA…EDGYDRQMEK (215 aa)) is b. Residues 552-630 (ILQNAGRLQG…VFERSVRSEG (79 aa)) form a c region.

Belongs to the heat shock protein 90 family. Homodimer.

The protein resides in the cytoplasm. Functionally, molecular chaperone. Has ATPase activity. The polypeptide is Chaperone protein HtpG (Rhizobium etli (strain ATCC 51251 / DSM 11541 / JCM 21823 / NBRC 15573 / CFN 42)).